The chain runs to 351 residues: Glycerol-1-phosphate dehydrogenase [NAD(P)+] (351 aa).

NAD(+) contacts are provided by residues 97–101 and 119–122; these read GKVID and TSPS. Position 124 (Asp124) interacts with substrate. Ser128 lines the NAD(+) pocket. Asp171 provides a ligand contact to substrate. Residues Asp171 and His251 each contribute to the Zn(2+) site. A substrate-binding site is contributed by His255. His267 contacts Zn(2+).

This sequence belongs to the glycerol-1-phosphate dehydrogenase family. Homodimer. Zn(2+) is required as a cofactor.

The protein resides in the cytoplasm. The catalysed reaction is sn-glycerol 1-phosphate + NAD(+) = dihydroxyacetone phosphate + NADH + H(+). It catalyses the reaction sn-glycerol 1-phosphate + NADP(+) = dihydroxyacetone phosphate + NADPH + H(+). Its pathway is membrane lipid metabolism; glycerophospholipid metabolism. In terms of biological role, catalyzes the NAD(P)H-dependent reduction of dihydroxyacetonephosphate (DHAP or glycerone phosphate) to glycerol 1-phosphate (G1P). The G1P thus generated is used as the glycerophosphate backbone of phospholipids in the cellular membranes of Archaea. The protein is Glycerol-1-phosphate dehydrogenase [NAD(P)+] of Saccharolobus solfataricus (strain ATCC 35092 / DSM 1617 / JCM 11322 / P2) (Sulfolobus solfataricus).